The chain runs to 474 residues: Gamma-aminobutyric acid receptor subunit beta-1 (474 aa).

A signal peptide spans 1-25 (MWTVQNRESLGLLSFPVMVAMVCCA). Topologically, residues 26–245 (HSSNEPSNMS…SFRLKRNIGY (220 aa)) are extracellular. N-linked (GlcNAc...) asparagine glycosylation is found at Asn33 and Asn105. Tyr122 serves as a coordination point for histamine. A disulfide bridge links Cys161 with Cys175. Asn174 carries an N-linked (GlcNAc...) asparagine glycan. Histamine contacts are provided by residues 181–182 (SY) and Thr227. 4-aminobutanoate is bound by residues Tyr182 and Thr227. Transmembrane regions (helical) follow at residues 246–267 (FILQ…SFWI), 271–293 (ASAA…STHL), and 305–327 (AIDI…YAFV). The Cytoplasmic portion of the chain corresponds to 328 to 451 (NYIFFGKGPQ…DLTDVNSIDK (124 aa)). Residues 452–473 (WSRMFFPITFSLFNVVYWLYYV) form a helical membrane-spanning segment.

The protein belongs to the ligand-gated ion channel (TC 1.A.9) family. Gamma-aminobutyric acid receptor (TC 1.A.9.5) subfamily. GABRB1 sub-subfamily. Heteropentamer, formed by a combination of alpha (GABRA1-6), beta (GABRB1-3), gamma (GABRG1-3), delta (GABRD), epsilon (GABRE), rho (GABRR1-3), pi (GABRP) and theta (GABRQ) chains, each subunit exhibiting distinct physiological and pharmacological properties. Binds UBQLN1.

It localises to the postsynaptic cell membrane. It is found in the cell membrane. It carries out the reaction chloride(in) = chloride(out). With respect to regulation, potentiated by histamine. In terms of biological role, beta subunit of the heteropentameric ligand-gated chloride channel gated by gamma-aminobutyric acid (GABA), a major inhibitory neurotransmitter in the brain. GABA-gated chloride channels, also named GABA(A) receptors (GABAAR), consist of five subunits arranged around a central pore and contain GABA active binding site(s) located at the alpha and beta subunit interface(s). When activated by GABA, GABAARs selectively allow the flow of chloride anions across the cell membrane down their electrochemical gradient. Chloride influx into the postsynaptic neuron following GABAAR opening decreases the neuron ability to generate a new action potential, thereby reducing nerve transmission. Beta-containing GABAARs can simultaneously bind GABA and histamine where histamine binds at the interface of two neighboring beta subunits, which may be involved in the regulation of sleep and wakefulness. The sequence is that of Gamma-aminobutyric acid receptor subunit beta-1 from Rattus norvegicus (Rat).